We begin with the raw amino-acid sequence, 200 residues long: ATP synthase subunit b 1 (200 aa).

Residues 14–34 (AAVIVVVSLMAFCCAGFAVAA) form a helical membrane-spanning segment.

This sequence belongs to the ATPase B chain family. In terms of assembly, F-type ATPases have 2 components, F(1) - the catalytic core - and F(0) - the membrane proton channel. F(1) has five subunits: alpha(3), beta(3), gamma(1), delta(1), epsilon(1). F(0) has three main subunits: a(1), b(2) and c(10-14). The alpha and beta chains form an alternating ring which encloses part of the gamma chain. F(1) is attached to F(0) by a central stalk formed by the gamma and epsilon chains, while a peripheral stalk is formed by the delta and b chains.

The protein localises to the cell inner membrane. Functionally, f(1)F(0) ATP synthase produces ATP from ADP in the presence of a proton or sodium gradient. F-type ATPases consist of two structural domains, F(1) containing the extramembraneous catalytic core and F(0) containing the membrane proton channel, linked together by a central stalk and a peripheral stalk. During catalysis, ATP synthesis in the catalytic domain of F(1) is coupled via a rotary mechanism of the central stalk subunits to proton translocation. In terms of biological role, component of the F(0) channel, it forms part of the peripheral stalk, linking F(1) to F(0). In Desulfosudis oleivorans (strain DSM 6200 / JCM 39069 / Hxd3) (Desulfococcus oleovorans), this protein is ATP synthase subunit b 1.